Consider the following 96-residue polypeptide: DNA-directed RNA polymerase subunit Rpo11 (96 aa).

This sequence belongs to the archaeal Rpo11/eukaryotic RPB11/RPC19 RNA polymerase subunit family. As to quaternary structure, part of the RNA polymerase complex.

The protein localises to the cytoplasm. The enzyme catalyses RNA(n) + a ribonucleoside 5'-triphosphate = RNA(n+1) + diphosphate. DNA-dependent RNA polymerase (RNAP) catalyzes the transcription of DNA into RNA using the four ribonucleoside triphosphates as substrates. The sequence is that of DNA-directed RNA polymerase subunit Rpo11 from Methanococcus maripaludis (strain C5 / ATCC BAA-1333).